Reading from the N-terminus, the 775-residue chain is Kojibiose phosphorylase (775 aa).

Position 361-362 (361-362 (WD)) interacts with substrate. The active-site Proton donor is the E501. Residue 614-615 (KQ) participates in substrate binding.

Belongs to the glycosyl hydrolase 65 family. In terms of assembly, homohexamer.

The catalysed reaction is kojibiose + phosphate = beta-D-glucose 1-phosphate + D-glucose. Its activity is regulated as follows. Inhibited by Hg(2+) and Pb(2+). Catalyzes the reversible phosphorolysis of kojibiose into beta-D-glucose 1-phosphate (Glc1P) and D-glucose. Can act with alpha-1,2-oligoglucans, such as selaginose, but more slowly. Inactive when disaccharides with linkages other than alpha-1,2 linkages, such as sophorose, trehalose, neotrehalose, nigerose, laminaribiose, maltose, cellobiose, isomaltose, gentiobiose, sucrose and lactose, are used as substrates. In contrast, shows broad specificity for the reverse reaction. Various monosaccharides and disaccharides having a glucosyl residue at the non-reducing end are effective acceptors. The polypeptide is Kojibiose phosphorylase (Thermoanaerobacter brockii (Thermoanaerobium brockii)).